The sequence spans 464 residues: E3 ubiquitin-protein ligase ITT1 (464 aa).

The TRIAD supradomain stretch occupies residues 176-455 (SNYHCCICME…EAYSGCYGRL (280 aa)). Zn(2+)-binding residues include Cys180, Cys183, Cys207, Cys210, Cys290, Cys300, Cys316, Cys319, Cys402, and Cys405. Residues 180–236 (CCICMEMEKGVRMIKLPCENANVEHYLCRGCAKSYFTAMIQENRISSVRCPQCEYKE) form an RING-type 1 zinc finger. Residues 267–338 (DTELCERYEK…HAWHGYNNKC (72 aa)) form an IBR-type zinc finger. The RING-type 2; atypical zinc finger occupies 402 to 431 (CPKCKVVVERSEGCNKMKCEVCGTLFCFIC). The active site involves Cys415. The Zn(2+) site is built by Cys420, Cys423, Cys428, Cys431, His443, and Cys451.

It belongs to the RBR family. RNF14 subfamily. Interacts with translation release factors eRF1 (SUP45) and eRF3 (SUP35) in vitro.

The enzyme catalyses [E2 ubiquitin-conjugating enzyme]-S-ubiquitinyl-L-cysteine + [acceptor protein]-L-lysine = [E2 ubiquitin-conjugating enzyme]-L-cysteine + [acceptor protein]-N(6)-ubiquitinyl-L-lysine.. It functions in the pathway protein modification; protein ubiquitination. E3 ubiquitin-protein ligase involved in translation quality control. Involved in the rescue of stalled ribosomes by promoting ubiquitination and degradation of proteins on stalled ribosomes. Specifically required to resolve RNA-protein cross-links caused by reactive aldehydes, which trigger translation stress by stalling ribosomes: acts by catalying 'Lys-6'-linked ubiquitination of RNA-protein cross-links, leading to their degradation. Interacts with the translation termination factors eRF1 (SUP45) and eRF3 (SUP35); overexpression decreases the efficiency of translation termination. The chain is E3 ubiquitin-protein ligase ITT1 from Saccharomyces cerevisiae (strain ATCC 204508 / S288c) (Baker's yeast).